The primary structure comprises 383 residues: Acetylornithine deacetylase (383 aa).

H80 is a binding site for Zn(2+). Residue D82 is part of the active site. D112 contributes to the Zn(2+) binding site. E144 is a catalytic residue. E145, E169, and H355 together coordinate Zn(2+).

The protein belongs to the peptidase M20A family. ArgE subfamily. As to quaternary structure, homodimer. Zn(2+) serves as cofactor. The cofactor is Co(2+). Glutathione is required as a cofactor.

The protein resides in the cytoplasm. The catalysed reaction is N(2)-acetyl-L-ornithine + H2O = L-ornithine + acetate. It functions in the pathway amino-acid biosynthesis; L-arginine biosynthesis; L-ornithine from N(2)-acetyl-L-ornithine (linear): step 1/1. Its function is as follows. Catalyzes the hydrolysis of the amide bond of N(2)-acetylated L-amino acids. Cleaves the acetyl group from N-acetyl-L-ornithine to form L-ornithine, an intermediate in L-arginine biosynthesis pathway, and a branchpoint in the synthesis of polyamines. The polypeptide is Acetylornithine deacetylase (Salmonella heidelberg (strain SL476)).